The following is a 120-amino-acid chain: UPF0231 protein Spro_4007 (120 aa).

The protein belongs to the UPF0231 family.

This Serratia proteamaculans (strain 568) protein is UPF0231 protein Spro_4007.